A 410-amino-acid polypeptide reads, in one-letter code: Heat stress transcription factor A-9 (410 aa).

The interval 1–44 (MGSKKRSPQHPAAAAPPPAVGGGGGGEVSGDGGASTANGPVVPK) is disordered. The segment covering 20 to 33 (VGGGGGGEVSGDGG) has biased composition (gly residues). A coiled-coil region spans residues 171–246 (GLEKEVETLK…QLVQQQQQQR (76 aa)). Residues 179–229 (LKRDKALLMQQLVDLRHYQQTSNLEVQNLIERLQVMEQNQQQMMALLAIVV) are hydrophobic repeat HR-A/B. Residues 256–260 (SKKRR) carry the Nuclear localization signal motif. The Nuclear export signal signature appears at 279-290 (AHIVEYLPPVPE).

This sequence belongs to the HSF family. Class A subfamily. Homotrimer. In terms of processing, exhibits temperature-dependent phosphorylation.

It localises to the cytoplasm. The protein localises to the nucleus. Functionally, transcriptional regulator that specifically binds DNA of heat shock promoter elements (HSE). This Oryza sativa subsp. japonica (Rice) protein is Heat stress transcription factor A-9 (HSFA9).